A 685-amino-acid chain; its full sequence is Nucleolar protein 4 (685 aa).

The tract at residues 1 to 21 is disordered; sequence MEETIENVEVPSSNVSKQNDD. The region spanning 26–103 is the RRM 1 domain; it reads KTLFVRSIPQ…HILRVDIAKR (78 aa). Basic and acidic residues predominate over residues 106–123; the sequence is RSKKTSEVVEKSTPESSE. The disordered stretch occupies residues 106-142; that stretch reads RSKKTSEVVEKSTPESSEKITGQNNEDEDDADGEDSM. Acidic residues predominate over residues 130-140; it reads NEDEDDADGED. Residues 147–225 enclose the RRM 2 domain; sequence PKLIIRNMPW…RKVAVDFAVQ (79 aa). Basic and acidic residues predominate over residues 231–242; the sequence is DYKKAQPEMNDK. The interval 231 to 285 is disordered; it reads DYKKAQPEMNDKDDNESGNEDAEENHDDEEDENEEEDRQVDQASKNKESKRKAQN. A compositionally biased stretch (acidic residues) spans 243–268; sequence DDNESGNEDAEENHDDEEDENEEEDR. S247 is subject to Phosphoserine. RRM domains are found at residues 290–383 and 462–612; these read FSVF…PTLV and TRLA…FAIE. T379 is subject to Phosphothreonine. Positions 622-631 are enriched in basic residues; it reads EQLKQARTKR. Residues 622 to 685 are disordered; that stretch reads EQLKQARTKR…FKRKRKHAKK (64 aa). A compositionally biased stretch (basic and acidic residues) spans 645 to 672; sequence SENKKPKKEEATTPTNPDDKKMGDDIKR. Residues 674 to 685 are compositionally biased toward basic residues; that stretch reads IGFKRKRKHAKK.

Interacts with NOP1.

The protein resides in the nucleus. It localises to the nucleolus. Its function is as follows. Required for 60S ribosomal subunit synthesis. Probably involved in the processing of 27S rRNA to produce mature 25S rRNA. This is Nucleolar protein 4 (NOP4) from Saccharomyces cerevisiae (strain ATCC 204508 / S288c) (Baker's yeast).